The following is a 387-amino-acid chain: Phosphoglycerate kinase (387 aa).

Residues 21–23 (DLN), arginine 36, 59–62 (HLGR), arginine 113, and arginine 146 each bind substrate. Residues lysine 197, glutamate 314, and 340–343 (GGDT) each bind ATP.

It belongs to the phosphoglycerate kinase family. Monomer.

The protein resides in the cytoplasm. It catalyses the reaction (2R)-3-phosphoglycerate + ATP = (2R)-3-phospho-glyceroyl phosphate + ADP. It participates in carbohydrate degradation; glycolysis; pyruvate from D-glyceraldehyde 3-phosphate: step 2/5. This is Phosphoglycerate kinase from Pseudomonas putida (strain ATCC 47054 / DSM 6125 / CFBP 8728 / NCIMB 11950 / KT2440).